Here is a 342-residue protein sequence, read N- to C-terminus: Dihydroorotase (342 aa).

Zn(2+)-binding residues include H13 and H15. Substrate contacts are provided by residues 15 to 17 (HLR) and N41. Zn(2+) contacts are provided by K98, H135, and H173. At K98 the chain carries N6-carboxylysine. H135 provides a ligand contact to substrate. L218 lines the substrate pocket. D246 provides a ligand contact to Zn(2+). D246 is a catalytic residue. Positions 250 and 262 each coordinate substrate.

Belongs to the metallo-dependent hydrolases superfamily. DHOase family. Class II DHOase subfamily. As to quaternary structure, homodimer. Zn(2+) serves as cofactor.

It carries out the reaction (S)-dihydroorotate + H2O = N-carbamoyl-L-aspartate + H(+). It functions in the pathway pyrimidine metabolism; UMP biosynthesis via de novo pathway; (S)-dihydroorotate from bicarbonate: step 3/3. Catalyzes the reversible cyclization of carbamoyl aspartate to dihydroorotate. This Photobacterium profundum (strain SS9) protein is Dihydroorotase.